Consider the following 498-residue polypeptide: ATP synthase subunit beta, chloroplastic (498 aa).

172 to 179 lines the ATP pocket; sequence GGAGVGKT.

The protein belongs to the ATPase alpha/beta chains family. F-type ATPases have 2 components, CF(1) - the catalytic core - and CF(0) - the membrane proton channel. CF(1) has five subunits: alpha(3), beta(3), gamma(1), delta(1), epsilon(1). CF(0) has four main subunits: a(1), b(1), b'(1) and c(9-12).

The protein localises to the plastid. It is found in the chloroplast thylakoid membrane. The catalysed reaction is ATP + H2O + 4 H(+)(in) = ADP + phosphate + 5 H(+)(out). Produces ATP from ADP in the presence of a proton gradient across the membrane. The catalytic sites are hosted primarily by the beta subunits. This is ATP synthase subunit beta, chloroplastic from Solanum lycopersicum (Tomato).